The primary structure comprises 329 residues: Putative helicase 109L (329 aa).

The region spanning 105-259 is the Helicase ATP-binding domain; that stretch reads LTLLTQHKSC…LFDMFFGPEM (155 aa). Position 118 to 125 (118 to 125) interacts with ATP; the sequence is CYTGFGKT. The short motif at 212–215 is the DEAH box element; sequence DEAH.

The protein belongs to the DEAD box helicase family. DEAH subfamily.

The protein is Putative helicase 109L of Invertebrate iridescent virus 3 (IIV-3).